The chain runs to 211 residues: tRNA (guanine-N(7)-)-methyltransferase (211 aa).

S-adenosyl-L-methionine-binding residues include E44, D69, D96, and D118. D118 is an active-site residue. K122 provides a ligand contact to substrate. Positions 124–129 (RHEKRR) are interaction with RNA. Substrate contacts are provided by residues D154 and 191–194 (TEYE).

Belongs to the class I-like SAM-binding methyltransferase superfamily. TrmB family.

It catalyses the reaction guanosine(46) in tRNA + S-adenosyl-L-methionine = N(7)-methylguanosine(46) in tRNA + S-adenosyl-L-homocysteine. It participates in tRNA modification; N(7)-methylguanine-tRNA biosynthesis. Catalyzes the formation of N(7)-methylguanine at position 46 (m7G46) in tRNA. This is tRNA (guanine-N(7)-)-methyltransferase from Streptococcus pneumoniae (strain CGSP14).